The primary structure comprises 249 residues: tRNA (guanine-N(1)-)-methyltransferase (249 aa).

S-adenosyl-L-methionine contacts are provided by residues Gly-121 and 141–146; that span reads LGDFVL.

It belongs to the RNA methyltransferase TrmD family. Homodimer.

The protein resides in the cytoplasm. The catalysed reaction is guanosine(37) in tRNA + S-adenosyl-L-methionine = N(1)-methylguanosine(37) in tRNA + S-adenosyl-L-homocysteine + H(+). Specifically methylates guanosine-37 in various tRNAs. The polypeptide is tRNA (guanine-N(1)-)-methyltransferase (Cereibacter sphaeroides (strain ATCC 17023 / DSM 158 / JCM 6121 / CCUG 31486 / LMG 2827 / NBRC 12203 / NCIMB 8253 / ATH 2.4.1.) (Rhodobacter sphaeroides)).